Consider the following 319-residue polypeptide: Red chlorophyll catabolite reductase, chloroplastic (319 aa).

Residues 1–39 (MAMIFCNTLYSSSSPSYLSPLTSKPSRFSKNLRPRAQFQ) constitute a chloroplast transit peptide. Red chlorophyll catabolite is bound by residues Glu-154 and 207 to 209 (YVS). The stretch at 255–286 (LERCVKEEEEKIVVGEEERMELERRDKSFRRK) forms a coiled coil. Residue Asp-291 participates in red chlorophyll catabolite binding.

As to quaternary structure, homodimer. Interacts with HCAR. Interacts with SGR1, NYC1, NOL, PPH, PAO and the LHCII complex. Part of a SGR1-CCE-LHCII complex, which acts in chlorophyll breakdown. In terms of tissue distribution, expressed in all tissues tested, including roots.

It localises to the plastid. The protein localises to the chloroplast stroma. The protein resides in the chloroplast thylakoid membrane. The enzyme catalyses primary fluorescent chlorophyll catabolite + 2 oxidized [2Fe-2S]-[ferredoxin] = red chlorophyll catabolite + 2 reduced [2Fe-2S]-[ferredoxin] + 3 H(+). It functions in the pathway porphyrin-containing compound metabolism; chlorophyll degradation. Catalyzes the key reaction of chlorophyll catabolism, porphyrin macrocycle cleavage of pheophorbide a (pheide a) to a primary fluorescent catabolite (pFCC). Works in a two-step reaction with pheophorbide a oxygenase (PaO) by reducing the C20/C1 double bond of the intermediate, RCC. Belongs to the chlorophyll catabolic enzymes (CCEs). This is Red chlorophyll catabolite reductase, chloroplastic from Arabidopsis thaliana (Mouse-ear cress).